A 129-amino-acid chain; its full sequence is Small ribosomal subunit protein uS11 (129 aa).

It belongs to the universal ribosomal protein uS11 family. As to quaternary structure, part of the 30S ribosomal subunit. Interacts with proteins S7 and S18. Binds to IF-3.

Located on the platform of the 30S subunit, it bridges several disparate RNA helices of the 16S rRNA. Forms part of the Shine-Dalgarno cleft in the 70S ribosome. The sequence is that of Small ribosomal subunit protein uS11 from Actinobacillus succinogenes (strain ATCC 55618 / DSM 22257 / CCUG 43843 / 130Z).